A 245-amino-acid polypeptide reads, in one-letter code: 1-(5-phosphoribosyl)-5-[(5-phosphoribosylamino)methylideneamino] imidazole-4-carboxamide isomerase 1 (245 aa).

The active-site Proton acceptor is the D7. D129 (proton donor) is an active-site residue.

This sequence belongs to the HisA/HisF family.

The protein localises to the cytoplasm. The enzyme catalyses 1-(5-phospho-beta-D-ribosyl)-5-[(5-phospho-beta-D-ribosylamino)methylideneamino]imidazole-4-carboxamide = 5-[(5-phospho-1-deoxy-D-ribulos-1-ylimino)methylamino]-1-(5-phospho-beta-D-ribosyl)imidazole-4-carboxamide. Its pathway is amino-acid biosynthesis; L-histidine biosynthesis; L-histidine from 5-phospho-alpha-D-ribose 1-diphosphate: step 4/9. In Photorhabdus laumondii subsp. laumondii (strain DSM 15139 / CIP 105565 / TT01) (Photorhabdus luminescens subsp. laumondii), this protein is 1-(5-phosphoribosyl)-5-[(5-phosphoribosylamino)methylideneamino] imidazole-4-carboxamide isomerase 1 (hisA1).